Consider the following 289-residue polypeptide: Type III pantothenate kinase (289 aa).

9–16 (DAGNSRVK) contributes to the ATP binding site. Substrate is bound by residues tyrosine 106 and 113 to 116 (GSDR). Aspartate 115 serves as the catalytic Proton acceptor. Threonine 139 is a binding site for ATP. Threonine 209 contacts substrate.

This sequence belongs to the type III pantothenate kinase family. As to quaternary structure, homodimer. NH4(+) is required as a cofactor. It depends on K(+) as a cofactor.

Its subcellular location is the cytoplasm. It carries out the reaction (R)-pantothenate + ATP = (R)-4'-phosphopantothenate + ADP + H(+). Its pathway is cofactor biosynthesis; coenzyme A biosynthesis; CoA from (R)-pantothenate: step 1/5. Catalyzes the phosphorylation of pantothenate (Pan), the first step in CoA biosynthesis. In Paraburkholderia phymatum (strain DSM 17167 / CIP 108236 / LMG 21445 / STM815) (Burkholderia phymatum), this protein is Type III pantothenate kinase.